A 596-amino-acid polypeptide reads, in one-letter code: Aspartate--tRNA(Asp/Asn) ligase (596 aa).

E172 serves as a coordination point for L-aspartate. The interval 196–199 (QLFK) is aspartate. Position 218 (R218) interacts with L-aspartate. Residues 218 to 220 (RDE) and Q227 contribute to the ATP site. H450 is an L-aspartate binding site. E484 lines the ATP pocket. R491 serves as a coordination point for L-aspartate. 536-539 (GLDR) provides a ligand contact to ATP.

This sequence belongs to the class-II aminoacyl-tRNA synthetase family. Type 1 subfamily. As to quaternary structure, homodimer.

It localises to the cytoplasm. The enzyme catalyses tRNA(Asx) + L-aspartate + ATP = L-aspartyl-tRNA(Asx) + AMP + diphosphate. Aspartyl-tRNA synthetase with relaxed tRNA specificity since it is able to aspartylate not only its cognate tRNA(Asp) but also tRNA(Asn). Reaction proceeds in two steps: L-aspartate is first activated by ATP to form Asp-AMP and then transferred to the acceptor end of tRNA(Asp/Asn). The polypeptide is Aspartate--tRNA(Asp/Asn) ligase (Acidithiobacillus ferrooxidans (strain ATCC 23270 / DSM 14882 / CIP 104768 / NCIMB 8455) (Ferrobacillus ferrooxidans (strain ATCC 23270))).